A 1203-amino-acid chain; its full sequence is Chromosome partition protein Smc (1203 aa).

Residue 32 to 39 (PNGSGKSN) coordinates ATP. 3 coiled-coil regions span residues 167–203 (ILKYRRRKEKALRKLDAMSANLARLTDLTTELRRQLK), 250–288 (MMRRDHDEAAARLAVASEELAAHEAALTELSGRAESVQQ), and 327–497 (DVLE…LERK). One can recognise an SMC hinge domain in the interval 511 to 622 (GLLGSIAKLV…VVNYLAEALG (112 aa)). Coiled-coil stretches lie at residues 657 to 689 (EVTSEIDKAGAELAAAEAHMAQLNAALSGALSE), 720 to 765 (RLGQ…NVEQ), and 976 to 1030 (YDRA…RKDL).

The protein belongs to the SMC family. Homodimer.

The protein resides in the cytoplasm. In terms of biological role, required for chromosome condensation and partitioning. This Mycobacterium leprae (strain TN) protein is Chromosome partition protein Smc.